The primary structure comprises 643 residues: Nicastrin (643 aa).

An N-terminal signal peptide occupies residues 1–20; sequence MRFKNVLVLLLLLVFSVINS. Over 21–611 the chain is Extracellular; sequence EPSAPATISD…VFKIGNSTTE (591 aa). The cysteines at positions 42 and 54 are disulfide-linked. Residues Asn96 and Asn166 are each glycosylated (N-linked (GlcNAc...) asparagine). Intrachain disulfides connect Cys204-Cys210 and Cys308-Cys318. 2 N-linked (GlcNAc...) asparagine glycosylation sites follow: Asn333 and Asn385. Cystine bridges form between Cys479–Cys486, Cys540–Cys551, and Cys546–Cys556. Asn584 carries an N-linked (GlcNAc...) asparagine glycan. The helical transmembrane segment at 612–632 threads the bilayer; the sequence is IWFLVSGLIELLVSIGLILYV. Residues 633–643 lie on the Cytoplasmic side of the membrane; that stretch reads KKFLSNRYKLL.

This sequence belongs to the nicastrin family. As to quaternary structure, component of the gamma-secretase complex, a complex composed of a presenilin homodimer, nicastrin, aph1 and pen2.

Its subcellular location is the membrane. In terms of biological role, essential subunit of the gamma-secretase complex, an endoprotease complex that catalyzes the intramembrane cleavage of integral membrane proteins such as Notch receptors and APP (amyloid-beta precursor protein). This Dictyostelium purpureum (Slime mold) protein is Nicastrin.